An 859-amino-acid polypeptide reads, in one-letter code: Photoactivated adenylate cyclase subunit beta-like protein ST- (859 aa).

Residues 56–149 form the BLUF 1 domain; it reads LRRLMYLSKS…GRMYGDWHMK (94 aa). The interval 420–444 is disordered; the sequence is RPPIFDDTPKSNPRPRTPGYGGRQR. The BLUF 2 domain maps to 471–563; the sequence is LTTLTYISQA…RVYTSEWTLT (93 aa). A disordered region spans residues 814 to 859; that stretch reads ARSGEQPLTEPEQAKPDFRVSPGRDRHGVSGRRSNSSQGKGSIQVG. The segment covering 825–841 has biased composition (basic and acidic residues); it reads EQAKPDFRVSPGRDRHG. A compositionally biased stretch (polar residues) spans 845 to 859; it reads RRSNSSQGKGSIQVG.

In terms of assembly, heterotetramer of two alpha and two beta subunits.

Its subcellular location is the cell projection. The protein localises to the cilium. It is found in the flagellum. In Euglena gracilis, this protein is Photoactivated adenylate cyclase subunit beta-like protein ST-.